We begin with the raw amino-acid sequence, 163 residues long: Putative 4-hydroxy-4-methyl-2-oxoglutarate aldolase (163 aa).

Residues 76 to 79 and Arg98 contribute to the substrate site; that span reads GDML. Asp99 contributes to the a divalent metal cation binding site.

This sequence belongs to the class II aldolase/RraA-like family. In terms of assembly, homotrimer. A divalent metal cation serves as cofactor.

It carries out the reaction 4-hydroxy-4-methyl-2-oxoglutarate = 2 pyruvate. The enzyme catalyses oxaloacetate + H(+) = pyruvate + CO2. Catalyzes the aldol cleavage of 4-hydroxy-4-methyl-2-oxoglutarate (HMG) into 2 molecules of pyruvate. Also contains a secondary oxaloacetate (OAA) decarboxylase activity due to the common pyruvate enolate transition state formed following C-C bond cleavage in the retro-aldol and decarboxylation reactions. The polypeptide is Putative 4-hydroxy-4-methyl-2-oxoglutarate aldolase (Pseudomonas putida (strain GB-1)).